The primary structure comprises 758 residues: Phosphoribosylformylglycinamidine synthase subunit PurL (758 aa).

H57 is a catalytic residue. Residues Y60 and R104 each contribute to the ATP site. Residue E106 participates in Mg(2+) binding. Residues 107–110 (SHNH) and R129 each bind substrate. The active-site Proton acceptor is the H108. D130 serves as a coordination point for Mg(2+). Substrate is bound at residue Q254. D282 provides a ligand contact to Mg(2+). Residue 326-328 (ESQ) coordinates substrate. ATP is bound by residues N509 and G546. Position 547 (N547) interacts with Mg(2+). S549 contacts substrate.

This sequence belongs to the FGAMS family. In terms of assembly, monomer. Part of the FGAM synthase complex composed of 1 PurL, 1 PurQ and 2 PurS subunits.

It localises to the cytoplasm. The catalysed reaction is N(2)-formyl-N(1)-(5-phospho-beta-D-ribosyl)glycinamide + L-glutamine + ATP + H2O = 2-formamido-N(1)-(5-O-phospho-beta-D-ribosyl)acetamidine + L-glutamate + ADP + phosphate + H(+). The protein operates within purine metabolism; IMP biosynthesis via de novo pathway; 5-amino-1-(5-phospho-D-ribosyl)imidazole from N(2)-formyl-N(1)-(5-phospho-D-ribosyl)glycinamide: step 1/2. Functionally, part of the phosphoribosylformylglycinamidine synthase complex involved in the purines biosynthetic pathway. Catalyzes the ATP-dependent conversion of formylglycinamide ribonucleotide (FGAR) and glutamine to yield formylglycinamidine ribonucleotide (FGAM) and glutamate. The FGAM synthase complex is composed of three subunits. PurQ produces an ammonia molecule by converting glutamine to glutamate. PurL transfers the ammonia molecule to FGAR to form FGAM in an ATP-dependent manner. PurS interacts with PurQ and PurL and is thought to assist in the transfer of the ammonia molecule from PurQ to PurL. The sequence is that of Phosphoribosylformylglycinamidine synthase subunit PurL from Corynebacterium ammoniagenes (Brevibacterium ammoniagenes).